The sequence spans 20 residues: Unknown protein NF045 from 2D-PAGE (20 aa).

This is Unknown protein NF045 from 2D-PAGE from Naegleria fowleri (Brain eating amoeba).